The sequence spans 337 residues: D-alanine--D-alanine ligase (337 aa).

The ATP-grasp domain occupies 124–330 (KMWFSALGIP…FTEYLSLVIN (207 aa)). 154–209 (ALAQWGSIFVKAASQGSSVGCYKVDDSAKVAGVLKDAFGYAPYVIVEKTIKARELE) contacts ATP. Residues Asp-284, Glu-297, and Asn-299 each coordinate Mg(2+).

The protein belongs to the D-alanine--D-alanine ligase family. Mg(2+) is required as a cofactor. It depends on Mn(2+) as a cofactor.

The protein localises to the cytoplasm. The enzyme catalyses 2 D-alanine + ATP = D-alanyl-D-alanine + ADP + phosphate + H(+). The protein operates within cell wall biogenesis; peptidoglycan biosynthesis. Cell wall formation. The sequence is that of D-alanine--D-alanine ligase from Shewanella baltica (strain OS185).